The primary structure comprises 207 residues: Outer-membrane lipoprotein LolB (207 aa).

The first 26 residues, 1–26 (MSKLKIDTKRRFSLLIALVLIISLSS), serve as a signal peptide directing secretion. Cys27 is lipidated: N-palmitoyl cysteine. Cys27 carries S-diacylglycerol cysteine lipidation.

Belongs to the LolB family. In terms of assembly, monomer.

Its subcellular location is the cell outer membrane. Functionally, plays a critical role in the incorporation of lipoproteins in the outer membrane after they are released by the LolA protein. The polypeptide is Outer-membrane lipoprotein LolB (Francisella tularensis subsp. tularensis (strain FSC 198)).